The primary structure comprises 393 residues: Protein FAM53C (393 aa).

Met1 carries the N-acetylmethionine modification. Positions 77-120 (HLRPPSRGNSPKEPPLSQVLSPEPPDPEKLPVPPAPPSKRHCRS) are disordered. A phosphoserine mark is found at Ser122 and Ser162. Disordered stretches follow at residues 141–167 (LWTP…PKRV) and 204–283 (QPCA…ARKT). Residues 204-215 (QPCATSPQSGSW) are compositionally biased toward polar residues. Residues Ser232, Ser234, Ser255, Ser273, and Ser299 each carry the phosphoserine modification. Residues 241–256 (ASRFLPSARSSPASSP) show a composition bias toward low complexity. The segment covering 343–355 (SCSPVEGSSQVLS) has biased composition (low complexity). Positions 343 to 365 (SCSPVEGSSQVLSESEEEEEGSV) are disordered.

This sequence belongs to the FAM53 family.

In Mus musculus (Mouse), this protein is Protein FAM53C.